The chain runs to 229 residues: ATP synthase subunit a (229 aa).

6 consecutive transmembrane segments (helical) span residues 14-34 (LIAI…ALIL), 68-88 (YFPF…LGLF), 98-118 (IVVT…GGLW), 124-144 (FLSI…LVLI), 157-179 (GVRL…GFGF), and 189-209 (NIFP…VAVI).

Belongs to the ATPase A chain family. As to quaternary structure, F-type ATPases have 2 components, CF(1) - the catalytic core - and CF(0) - the membrane proton channel. CF(1) has five subunits: alpha(3), beta(3), gamma(1), delta(1), epsilon(1). CF(0) has three main subunits: a, b and c.

It localises to the mitochondrion inner membrane. In terms of biological role, mitochondrial membrane ATP synthase (F(1)F(0) ATP synthase or Complex V) produces ATP from ADP in the presence of a proton gradient across the membrane which is generated by electron transport complexes of the respiratory chain. F-type ATPases consist of two structural domains, F(1) - containing the extramembraneous catalytic core and F(0) - containing the membrane proton channel, linked together by a central stalk and a peripheral stalk. During catalysis, ATP synthesis in the catalytic domain of F(1) is coupled via a rotary mechanism of the central stalk subunits to proton translocation. Key component of the proton channel; it may play a direct role in the translocation of protons across the membrane. The polypeptide is ATP synthase subunit a (ATPASE6) (Metridium senile (Brown sea anemone)).